A 349-amino-acid chain; its full sequence is Delta(7)-sterol 5(6)-desaturase ERG3A (349 aa).

3 consecutive transmembrane segments (helical) span residues 84–104, 124–144, and 162–182; these read ITWIFGLLVYFIVATLSYIFI, IIAANKAMPVMAIITAPFFLL, and LWYDFFQFPLFLLFTDFCIYW. Positions 170-296 constitute a Fatty acid hydroxylase domain; the sequence is PLFLLFTDFC…FTAFDRMGGT (127 aa). Residues 184 to 188 carry the Histidine box-1 motif; that stretch reads HRWLH. A Histidine box-2 motif is present at residues 197–201; that stretch reads HKLHH. Residues 227 to 247 form a helical membrane-spanning segment; that stretch reads HIFPFIFPLQKMAYVALFVFV. Residues 272-276 carry the Histidine box-3 motif; it reads HSLHH.

Belongs to the sterol desaturase family.

Its subcellular location is the endoplasmic reticulum membrane. The catalysed reaction is episterol + 2 Fe(II)-[cytochrome b5] + O2 + 2 H(+) = 5-dehydroepisterol + 2 Fe(III)-[cytochrome b5] + 2 H2O. It participates in steroid metabolism; ergosterol biosynthesis. In terms of biological role, C-5 sterol desaturase; part of the third module of ergosterol biosynthesis pathway that includes the late steps of the pathway. ERG3A and ERG3BB catalyze the introduction of a C-5 double bond in the B ring to produce 5-dehydroepisterol. The third module or late pathway involves the ergosterol synthesis itself through consecutive reactions that mainly occur in the endoplasmic reticulum (ER) membrane. Firstly, the squalene synthase ERG9 catalyzes the condensation of 2 farnesyl pyrophosphate moieties to form squalene, which is the precursor of all steroids. Squalene synthase is crucial for balancing the incorporation of farnesyl diphosphate (FPP) into sterol and nonsterol isoprene synthesis. Secondly, squalene is converted into lanosterol by the consecutive action of the squalene epoxidase ERG1 and the lanosterol synthase ERG7. Then, the delta(24)-sterol C-methyltransferase ERG6 methylates lanosterol at C-24 to produce eburicol. Eburicol is the substrate of the sterol 14-alpha demethylase encoded by CYP51A, CYP51B and CYP51C, to yield 4,4,24-trimethyl ergosta-8,14,24(28)-trienol. CYP51B encodes the enzyme primarily responsible for sterol 14-alpha-demethylation, and plays an essential role in ascospore formation. CYP51A encodes an additional sterol 14-alpha-demethylase, induced on ergosterol depletion and responsible for the intrinsic variation in azole sensitivity. The third CYP51 isoform, CYP51C, does not encode a sterol 14-alpha-demethylase, but is required for full virulence on host wheat ears. The C-14 reductase ERG24 then reduces the C14=C15 double bond which leads to 4,4-dimethylfecosterol. A sequence of further demethylations at C-4, involving the C-4 demethylation complex containing the C-4 methylsterol oxidases ERG25, the sterol-4-alpha-carboxylate 3-dehydrogenase ERG26 and the 3-keto-steroid reductase ERG27, leads to the production of fecosterol via 4-methylfecosterol. ERG28 has a role as a scaffold to help anchor ERG25, ERG26 and ERG27 to the endoplasmic reticulum. The C-8 sterol isomerase ERG2 then catalyzes the reaction which results in unsaturation at C-7 in the B ring of sterols and thus converts fecosterol to episterol. The sterol-C5-desaturases ERG3A and ERG3BB then catalyze the introduction of a C-5 double bond in the B ring to produce 5-dehydroepisterol. The C-22 sterol desaturases ERG5A and ERG5B further convert 5-dehydroepisterol into ergosta-5,7,22,24(28)-tetraen-3beta-ol by forming the C-22(23) double bond in the sterol side chain. Finally, ergosta-5,7,22,24(28)-tetraen-3beta-ol is substrate of the C-24(28) sterol reductase ERG4 to produce ergosterol. In Gibberella zeae (strain ATCC MYA-4620 / CBS 123657 / FGSC 9075 / NRRL 31084 / PH-1) (Wheat head blight fungus), this protein is Delta(7)-sterol 5(6)-desaturase ERG3A.